A 140-amino-acid polypeptide reads, in one-letter code: 3-hydroxyacyl-[acyl-carrier-protein] dehydratase FabZ (140 aa).

Residue His47 is part of the active site.

Belongs to the thioester dehydratase family. FabZ subfamily.

The protein localises to the cytoplasm. The catalysed reaction is a (3R)-hydroxyacyl-[ACP] = a (2E)-enoyl-[ACP] + H2O. Its function is as follows. Involved in unsaturated fatty acids biosynthesis. Catalyzes the dehydration of short chain beta-hydroxyacyl-ACPs and long chain saturated and unsaturated beta-hydroxyacyl-ACPs. This is 3-hydroxyacyl-[acyl-carrier-protein] dehydratase FabZ from Streptococcus agalactiae serotype III (strain NEM316).